The sequence spans 114 residues: Holo-[acyl-carrier-protein] synthase (114 aa).

Positions 5 and 50 each coordinate Mg(2+).

The protein belongs to the P-Pant transferase superfamily. AcpS family. Mg(2+) serves as cofactor.

It localises to the cytoplasm. The enzyme catalyses apo-[ACP] + CoA = holo-[ACP] + adenosine 3',5'-bisphosphate + H(+). Functionally, transfers the 4'-phosphopantetheine moiety from coenzyme A to a Ser of acyl-carrier-protein. This Campylobacter curvus (strain 525.92) protein is Holo-[acyl-carrier-protein] synthase.